The primary structure comprises 94 residues: Large ribosomal subunit protein bL27 (94 aa).

Positions 1–9 (MLELNLQLF) are excised as a propeptide. Residues 12 to 33 (KKGGGSTSNGRDSQAKRLGAKA) form a disordered region.

Belongs to the bacterial ribosomal protein bL27 family. Post-translationally, the N-terminus is cleaved by ribosomal processing cysteine protease Prp.

In Lactococcus lactis subsp. lactis (strain IL1403) (Streptococcus lactis), this protein is Large ribosomal subunit protein bL27.